Here is a 366-residue protein sequence, read N- to C-terminus: Anhydro-N-acetylmuramic acid kinase (366 aa).

10–17 provides a ligand contact to ATP; sequence GTSMDGID.

Belongs to the anhydro-N-acetylmuramic acid kinase family.

The enzyme catalyses 1,6-anhydro-N-acetyl-beta-muramate + ATP + H2O = N-acetyl-D-muramate 6-phosphate + ADP + H(+). Its pathway is amino-sugar metabolism; 1,6-anhydro-N-acetylmuramate degradation. The protein operates within cell wall biogenesis; peptidoglycan recycling. In terms of biological role, catalyzes the specific phosphorylation of 1,6-anhydro-N-acetylmuramic acid (anhMurNAc) with the simultaneous cleavage of the 1,6-anhydro ring, generating MurNAc-6-P. Is required for the utilization of anhMurNAc either imported from the medium or derived from its own cell wall murein, and thus plays a role in cell wall recycling. In Legionella pneumophila (strain Corby), this protein is Anhydro-N-acetylmuramic acid kinase.